The primary structure comprises 201 residues: Small ribosomal subunit protein uS4 (201 aa).

The disordered stretch occupies residues 1-42 (MARYTGPVTRKSRRLGTDLVGGDQSFEKRPYPPGQHGRARIK). In terms of domain architecture, S4 RNA-binding spans 91–157 (SRLDNVVYRA…VPFQIARETA (67 aa)).

It belongs to the universal ribosomal protein uS4 family. In terms of assembly, part of the 30S ribosomal subunit. Contacts protein S5. The interaction surface between S4 and S5 is involved in control of translational fidelity.

In terms of biological role, one of the primary rRNA binding proteins, it binds directly to 16S rRNA where it nucleates assembly of the body of the 30S subunit. Functionally, with S5 and S12 plays an important role in translational accuracy. This chain is Small ribosomal subunit protein uS4, found in Mycobacterium marinum (strain ATCC BAA-535 / M).